Consider the following 167-residue polypeptide: Signal peptidase complex catalytic subunit SEC11 (167 aa).

The Cytoplasmic portion of the chain corresponds to 1-12 (MNIRHQLVQFLN). Residues 13 to 30 (LALVLSSAFMAWKTLSVI) form a helical; Signal-anchor for type II membrane protein membrane-spanning segment. The Lumenal portion of the chain corresponds to 31 to 167 (TNSHSPIVVV…MGISSLLSNE (137 aa)). Active-site charge relay system residues include Ser-44, His-83, and Asp-109. The C-terminal short (CTS) helix stretch occupies residues 153–164 (TLLGLMGISSLL).

Belongs to the peptidase S26B family. In terms of assembly, component of the signal peptidase complex (SPC) composed of a catalytic subunit SEC11 and three accessory subunits SPC1, SPC2 and SPC3. The complex induces a local thinning of the ER membrane which is used to measure the length of the signal peptide (SP) h-region of protein substrates. This ensures the selectivity of the complex towards h-regions shorter than 18-20 amino acids. SPC associates with the translocon complex.

The protein resides in the endoplasmic reticulum membrane. It catalyses the reaction Cleavage of hydrophobic, N-terminal signal or leader sequences from secreted and periplasmic proteins.. In terms of biological role, catalytic component of the signal peptidase complex (SPC) which catalyzes the cleavage of N-terminal signal sequences from nascent proteins as they are translocated into the lumen of the endoplasmic reticulum. Specifically cleaves N-terminal signal peptides that contain a hydrophobic alpha-helix (h-region) shorter than 18-20 amino acids. The chain is Signal peptidase complex catalytic subunit SEC11 (SEC11) from Debaryomyces hansenii (strain ATCC 36239 / CBS 767 / BCRC 21394 / JCM 1990 / NBRC 0083 / IGC 2968) (Yeast).